Consider the following 556-residue polypeptide: Mitochondrial distribution and morphology protein 34-2 (556 aa).

The region spanning methionine 1–leucine 195 is the SMP-LTD domain. 3 disordered regions span residues glutamate 206–glycine 239, threonine 299–proline 423, and histidine 440–proline 473. Polar residues predominate over residues threonine 299 to alanine 333. The segment covering serine 334 to serine 357 has biased composition (low complexity). The segment covering arginine 362–arginine 374 has biased composition (basic residues). Residues valine 375–aspartate 385 are compositionally biased toward basic and acidic residues. A compositionally biased stretch (polar residues) spans serine 391–proline 402. Residues glutamate 459–aspartate 468 are compositionally biased toward basic and acidic residues.

This sequence belongs to the MDM34 family. Component of the ER-mitochondria encounter structure (ERMES) or MDM complex, composed of mmm1, mdm10, mdm12 and mdm34.

It localises to the mitochondrion outer membrane. Functionally, component of the ERMES/MDM complex, which serves as a molecular tether to connect the endoplasmic reticulum (ER) and mitochondria. Components of this complex are involved in the control of mitochondrial shape and protein biogenesis, and function in nonvesicular lipid trafficking between the ER and mitochondria. Mdm34 is required for the interaction of the ER-resident membrane protein mmm1 and the outer mitochondrial membrane-resident beta-barrel protein mdm10. The sequence is that of Mitochondrial distribution and morphology protein 34-2 from Penicillium rubens (strain ATCC 28089 / DSM 1075 / NRRL 1951 / Wisconsin 54-1255) (Penicillium chrysogenum).